The primary structure comprises 421 residues: MELEAKVKKMGLGHEQGFGAPCLKCKEKCEGFELHFWRKICRNCKCGQEEHDVLLSNEEDRKVGKLFEDTKYTTLIAKLKSDGIPMYKRNVMILTNPVAAKKNVSINTVTYEWAPPVQNQALARQYMQMLPKEKQPVAGSEGAQYRKKQLAKQLPAHDQDPSKCHELSPKEVKEMEQFVKKYKSEALGVGDVKLPREMDAQSTNRMYIPGGDRSTAAAVGAMEDKSAEHKRTQYSCYCCKQSMKEGDPAIYAERAGYDKLWHPACFVCSTCHELLVDMIYFWKNGKLYCGRHYCDSEKPRCAGCDELIFSNEYTQAENQNWHLKHFCCFDCDNILAGEIYVMVNDKPVCKPCYVKNHAVVCQGCHNAIDPEVQRVTYNNFSWHASTECFLCSCCSKCLIGQKFMPVEGMVFCSVECKKMMS.

The 108-residue stretch at 92–199 folds into the PET domain; that stretch reads MILTNPVAAK…GDVKLPREMD (108 aa). Residues 133–164 form a disordered region; that stretch reads EKQPVAGSEGAQYRKKQLAKQLPAHDQDPSKC. Residues 155–164 are compositionally biased toward basic and acidic residues; that stretch reads PAHDQDPSKC. 3 LIM zinc-binding domains span residues 234–297, 299–359, and 362–421; these read YSCY…CDSE, PRCA…NHAV, and QGCH…KMMS.

This sequence belongs to the prickle / espinas / testin family. Interacts via LIM domain 1 with ZYX. Interacts (via LIM domain 3) with ENAH and VASP. Interacts with ALKBH4, talin, actin, alpha-actinin, GRIP1 and PXN. Interacts (via LIM domain 2) with ACTL7A (via N-terminus). Heterodimer with ACTL7A; the heterodimer interacts with ENAH to form a heterotrimer.

Its subcellular location is the cytoplasm. The protein localises to the cell junction. It is found in the focal adhesion. In terms of biological role, scaffold protein that may play a role in cell adhesion, cell spreading and in the reorganization of the actin cytoskeleton. Plays a role in the regulation of cell proliferation. May act as a tumor suppressor. This chain is Testin (TES), found in Canis lupus familiaris (Dog).